Consider the following 260-residue polypeptide: tRNA (guanine-N(1)-)-methyltransferase (260 aa).

S-adenosyl-L-methionine is bound by residues Gly117 and Leu137–Leu142.

Belongs to the RNA methyltransferase TrmD family. Homodimer.

The protein resides in the cytoplasm. The catalysed reaction is guanosine(37) in tRNA + S-adenosyl-L-methionine = N(1)-methylguanosine(37) in tRNA + S-adenosyl-L-homocysteine + H(+). Specifically methylates guanosine-37 in various tRNAs. The sequence is that of tRNA (guanine-N(1)-)-methyltransferase from Cupriavidus necator (strain ATCC 17699 / DSM 428 / KCTC 22496 / NCIMB 10442 / H16 / Stanier 337) (Ralstonia eutropha).